A 341-amino-acid chain; its full sequence is Chitin synthase 3 complex protein CSI2 (341 aa).

Low complexity predominate over residues 35–70 (SSSTKAADSSSKGSSSAKTTTSLGKSSVTSKDVSSS). 3 disordered regions span residues 35-78 (SSST…SSTK), 272-291 (DSLS…GKFT), and 298-341 (NYTS…DGKE).

Functionally, appears to be a structural component of the chitin synthase 3 complex. The polypeptide is Chitin synthase 3 complex protein CSI2 (CSI2) (Saccharomyces cerevisiae (strain ATCC 204508 / S288c) (Baker's yeast)).